A 523-amino-acid chain; its full sequence is Protein disulfide-isomerase (523 aa).

Positions 1–22 are cleaved as a signal peptide; it reads MPGVRSLLLALAGVSLAPAVLA. Residues 24–137 enclose the Thioredoxin 1 domain; the sequence is DASTDSSDVH…TSYMIKQSLP (114 aa). Residues Cys-59 and Cys-62 each act as nucleophile in the active site. Cysteines 59 and 62 form a disulfide. An N-linked (GlcNAc...) asparagine glycan is attached at Asn-170. The Thioredoxin 2 domain occupies 344 to 475; sequence VIAGDIAPSV…LANFVRDNGK (132 aa). An intrachain disulfide couples Cys-394 to Cys-397. 2 stretches are compositionally biased toward basic and acidic residues: residues 478–502 and 512–523; these read VDAY…DAEA and SEEKADKEHEEL. The disordered stretch occupies residues 478 to 523; it reads VDAYDEKKVEKDGSDVTGKPKDAEAPPKPSDAPESEEKADKEHEEL. The Prevents secretion from ER signature appears at 520–523; sequence HEEL.

It belongs to the protein disulfide isomerase family.

Its subcellular location is the endoplasmic reticulum lumen. It catalyses the reaction Catalyzes the rearrangement of -S-S- bonds in proteins.. In terms of biological role, participates in the folding of proteins containing disulfide bonds, may be involved in glycosylation, prolyl hydroxylation and triglyceride transfer. This chain is Protein disulfide-isomerase, found in Arthroderma benhamiae (strain ATCC MYA-4681 / CBS 112371) (Trichophyton mentagrophytes).